The chain runs to 497 residues: E3 ubiquitin-protein ligase CBL-C (497 aa).

The 4H stretch occupies residues 7–145 (PQGWQWGEPR…SALFPEGKYC (139 aa)). Residues 7 to 321 (PQGWQWGEPR…GKNHNPDLTE (315 aa)) form the Cbl-PTB domain. The interval 146 to 218 (GHLYQITKGS…FEFDIFTRLF (73 aa)) is EF-hand-like. Residues Asp199, Thr201, and Glu210 each coordinate Ca(2+). The interval 219 to 321 (QPWPTLLKNW…GKNHNPDLTE (103 aa)) is SH2-like. Residue Arg264 coordinates 4-O-phospho-L-tyrosine. The interval 322-350 (LCRAVLNQCIQVSQEQLQLYQAMNSTFEL) is linker. The residue at position 341 (Tyr341) is a Phosphotyrosine; by SRC. An RING-type zinc finger spans residues 351 to 390 (CKICTERDKDVRIEPCGHLLCSCCLAAWQHSDSQTCPFCR). The tract at residues 351–497 (CKICTERDKD…QVREGATESS (147 aa)) is interaction with RET.

Interacts with Ubiquitin-conjugating enzyme E2 UBE2D2 and UBE2D3. Interacts with EGFR (tyrosine phosphorylated). Interacts with the SH3 domain proteins LYN and CRK. Interacts (via RING-type zinc finger) with TGFB1I1 (via LIM zinc-binding domain 2); the interaction is direct and enhances the E3 activity. Interacts directly with RET (inactive) and CD2AP; dissociates from RET upon RET activation by GDNF which also increases the interaction with CD2AP suggesting dissociation as CBLC:CD2AP complex. Interacts with SRC; the interaction is enhanced when SRC is phosphorylated at 'Tyr-419'. In terms of processing, phosphorylated on multiple tyrosine residues by SRC. Autoubiquitinated, when phosphorylated at Tyr-341.

It carries out the reaction S-ubiquitinyl-[E2 ubiquitin-conjugating enzyme]-L-cysteine + [acceptor protein]-L-lysine = [E2 ubiquitin-conjugating enzyme]-L-cysteine + N(6)-ubiquitinyl-[acceptor protein]-L-lysine.. Its activity is regulated as follows. Phosphorylation at Tyr-341 is necessary and sufficient for the activation of E3 activity. Acts as an E3 ubiquitin-protein ligase, which accepts ubiquitin from specific E2 ubiquitin-conjugating enzymes, and then transfers it to substrates promoting their degradation by the proteasome. Functionally coupled with the E2 ubiquitin-protein ligases UB2D1, UB2D2 and UB2D3. Regulator of EGFR mediated signal transduction; upon EGF activation, ubiquitinates EGFR. Inhibits EGF stimulated MAPK1 activation. Promotes ubiquitination of SRC phosphorylated at 'Tyr-419', has the highest ubiquitin ligase activity among CBL family proteins. In collaboration with CD2AP may act as regulatory checkpoint for Ret signaling by modulating the rate of RET degradation after ligand activation; CD2AP converts it from an inhibitor to a promoter of RET degradation; the function limits the potency of GDNF on neuronal survival. This chain is E3 ubiquitin-protein ligase CBL-C (Cblc), found in Rattus norvegicus (Rat).